Reading from the N-terminus, the 340-residue chain is Tryptophan--tRNA ligase (340 aa).

Residues 11–13 and 19–20 each bind ATP; these read RPT and GH. Residues 12 to 20 carry the 'HIGH' region motif; sequence PTGKLHLGH. Position 140 (Asp140) interacts with L-tryptophan. ATP contacts are provided by residues 152–154, Leu194, and 202–206; these read GND and KMSKS. The 'KMSKS' region signature appears at 202 to 206; sequence KMSKS.

The protein belongs to the class-I aminoacyl-tRNA synthetase family. In terms of assembly, homodimer.

Its subcellular location is the cytoplasm. The catalysed reaction is tRNA(Trp) + L-tryptophan + ATP = L-tryptophyl-tRNA(Trp) + AMP + diphosphate + H(+). In terms of biological role, catalyzes the attachment of tryptophan to tRNA(Trp). The polypeptide is Tryptophan--tRNA ligase (Streptococcus mutans serotype c (strain ATCC 700610 / UA159)).